The chain runs to 367 residues: Methionine aminopeptidase 1 (367 aa).

The segment at G3–N57 adopts a C6H2-type zinc-finger fold. Positions 6, 11, 19, 22, 34, 38, 46, and 50 each coordinate Zn(2+). An a protein-binding site is contributed by H185. Positions 202, 213, and 276 each coordinate Zn(2+). H283 is an a protein binding site. Zn(2+)-binding residues include E309 and E340.

It belongs to the peptidase M24A family. Methionine aminopeptidase type 1 subfamily. As to quaternary structure, associates with the 60S ribosomal subunit of the 80S translational complex. Requires Zn(2+) as cofactor. Co(2+) is required as a cofactor. The cofactor is Mn(2+). It depends on Fe(2+) as a cofactor.

Its subcellular location is the cytoplasm. It catalyses the reaction Release of N-terminal amino acids, preferentially methionine, from peptides and arylamides.. In terms of biological role, cotranslationally removes the N-terminal methionine from nascent proteins. The N-terminal methionine is often cleaved when the second residue in the primary sequence is small and uncharged (Met-Ala-, Cys, Gly, Pro, Ser, Thr, or Val). In Dictyostelium discoideum (Social amoeba), this protein is Methionine aminopeptidase 1 (metap1).